Here is a 487-residue protein sequence, read N- to C-terminus: UDP-glycosyltransferase 72E1 (487 aa).

The active-site Proton acceptor is the His18. An anthocyanidin is bound at residue His18. Asp116 (charge relay) is an active-site residue. UDP-alpha-D-glucose is bound by residues Ala351, Gln353, His368, Trp371, Asn372, Ser373, and Glu376. Residue Ala391 coordinates an anthocyanidin. 2 residues coordinate UDP-alpha-D-glucose: Glu392 and Gln393.

Belongs to the UDP-glycosyltransferase family. In terms of assembly, interacts with SIS8. As to expression, expressed in seedlings, roots and leaves.

It localises to the nucleus. The catalysed reaction is (E)-coniferaldehyde + UDP-alpha-D-glucose = 4-O-(beta-D-glucosyl)-4-(E)-coniferyl aldehyde + UDP + H(+). It catalyses the reaction (E)-sinapaldehyde + UDP-alpha-D-glucose = 4-O-(beta-D-glucosyl)-4-trans-sinapoyl aldehyde + UDP + H(+). In terms of biological role, UDP-glycosyltransferase that glucosylates coniferyl aldehyde to form coniferyl aldehyde 4-O-glucoside. Glucosylates sinapyl aldehyde to form sinapyl aldehyde 4-O-glucoside. Is not active in presence of coniferyl alcohol or sinapyl alcohol. Can glucosylate the phytotoxic xenobiotic compound 2,4,5-trichlorophenol (TCP). This chain is UDP-glycosyltransferase 72E1, found in Arabidopsis thaliana (Mouse-ear cress).